The following is a 323-amino-acid chain: Mycothiol acetyltransferase (323 aa).

E44 lines the 1D-myo-inositol 2-(L-cysteinylamino)-2-deoxy-alpha-D-glucopyranoside pocket. Residue 98-100 coordinates acetyl-CoA; that stretch reads LAV. The N-acetyltransferase domain maps to 173–323; the sequence is VSLRAFIPGQ…DVMYGPKNGG (151 aa). The 1D-myo-inositol 2-(L-cysteinylamino)-2-deoxy-alpha-D-glucopyranoside site is built by E200, K240, and E253. Residues 257-259 and 264-270 contribute to the acetyl-CoA site; these read VGV and QGMGLGK. Y291 contributes to the 1D-myo-inositol 2-(L-cysteinylamino)-2-deoxy-alpha-D-glucopyranoside binding site.

The protein belongs to the acetyltransferase family. MshD subfamily. In terms of assembly, monomer.

It carries out the reaction 1D-myo-inositol 2-(L-cysteinylamino)-2-deoxy-alpha-D-glucopyranoside + acetyl-CoA = mycothiol + CoA + H(+). In terms of biological role, catalyzes the transfer of acetyl from acetyl-CoA to desacetylmycothiol (Cys-GlcN-Ins) to form mycothiol. This is Mycothiol acetyltransferase from Arthrobacter sp. (strain FB24).